The sequence spans 338 residues: Glycerol-3-phosphate dehydrogenase [NAD(P)+] (338 aa).

NADPH contacts are provided by S11, W12, H32, H33, and K109. Residues K109, G140, and S142 each contribute to the sn-glycerol 3-phosphate site. Residue A144 participates in NADPH binding. 5 residues coordinate sn-glycerol 3-phosphate: K195, D248, S258, R259, and N260. K195 serves as the catalytic Proton acceptor. R259 provides a ligand contact to NADPH. Residues V283 and E285 each coordinate NADPH.

Belongs to the NAD-dependent glycerol-3-phosphate dehydrogenase family.

The protein resides in the cytoplasm. The enzyme catalyses sn-glycerol 3-phosphate + NAD(+) = dihydroxyacetone phosphate + NADH + H(+). The catalysed reaction is sn-glycerol 3-phosphate + NADP(+) = dihydroxyacetone phosphate + NADPH + H(+). It participates in membrane lipid metabolism; glycerophospholipid metabolism. Its function is as follows. Catalyzes the reduction of the glycolytic intermediate dihydroxyacetone phosphate (DHAP) to sn-glycerol 3-phosphate (G3P), the key precursor for phospholipid synthesis. The sequence is that of Glycerol-3-phosphate dehydrogenase [NAD(P)+] from Leuconostoc citreum (strain KM20).